The sequence spans 253 residues: uncharacterized protein (253 aa).

S-adenosyl-L-methionine is bound by residues Gly45, 66–67 (DA), 94–95 (AE), and Arg110.

This sequence belongs to the methyltransferase superfamily.

This is an uncharacterized protein from Bacillus subtilis (strain 168).